A 533-amino-acid polypeptide reads, in one-letter code: Probable protein kinase UbiB (533 aa).

A helical transmembrane segment spans residues 24-44 (LILELPMLPWWLRLLGATLPW). Residues 126-494 (RFEREPLASA…WKGSRHDWLG (369 aa)) enclose the Protein kinase domain. Residues 132–140 (LASASVAQV) and Lys154 each bind ATP. The active-site Proton acceptor is the Asp289. A helical transmembrane segment spans residues 510 to 530 (LGQQLEAWPAWVMLAGGVFLI).

Belongs to the ABC1 family. UbiB subfamily.

It localises to the cell inner membrane. It functions in the pathway cofactor biosynthesis; ubiquinone biosynthesis [regulation]. Its function is as follows. Is probably a protein kinase regulator of UbiI activity which is involved in aerobic coenzyme Q (ubiquinone) biosynthesis. The protein is Probable protein kinase UbiB of Pseudomonas aeruginosa (strain LESB58).